The sequence spans 1112 residues: MKVEEKAGVKKLEPTSYRRRHPEQDFPSIHIGFPVPGYSQRKSDSKGHLSGLQRVQWSLQPDKSQQDLAGPDGIKASSLGGSVDFTKRIRSPAAEQLQDILGEEDEAPNPTLFTEMDTLQHDGDQMEWKESARWIKFEEKVEEGGERWSKPHVSTLSLHSLFELRTCLQTGTVLLDLDSGSLPQIIDDVIEKQIEGGLLRPELRERVSYVLLRKHRHQTKKPIHRSLADIGKSVSTTNRSSARSPSAGPTLHHSTEDLRIRQSTSYGHLCHAQSRSMNDISHTPNTDQRKNKFMKKIPKDSEASNVLVGEVDFLDQPFIAFVRLAQSSMLGGVTEVPVPTRFLFILLGPSGRAKSYNEIGRAIATLMVDDLFSDVAYKARNREDLIAGVDEFLDEVIVLPPGEWDPNIRIEPPKKVPSADKRKSVFSLAELGQMNGSVGRSGASAGGGGSGGGAGGSGAGGGGSGNEAEMPAMHEIGEELIWTGRFFGGLRLDVKRKLPWFPSDFYDGFHIQSISAVLFIYLGCITNAITFGGLLGDATDNYQGVMESFLGTAMAGSLFCLFSGQPLIILSSTGPILIFEKLLFDFSKANGLDYMEFRLWIGLHSAIQCLILVATDASFIIKYITRFTEEGFSTLISFIFIYDAIKKMIGAFKYYPINTDFKPDSITTYKCECVAPDTVNTTTVNDSALLVPNTNMSVYTPLNLTALDWSLLSKKECLSYGGRLLGSSCQFVPDLALMSFILFFGTYSMTLTLKKFKFSRYFPTKVRTLVADFSIVFSILLFCGIDACFGLQTPKLHVPNVIKPTRPDRGWFVAPFGKNPWWVYPASILPALLVTILIFMDQQITAVIVNRKENKLRKAAGYHLDLFWVGILMALCSFMGLPWYVAATVISIAHIDSLKMETETSAPGEQPQFLGVREQRVTGVMVFILTGISVFLAPILKYIPMPVLYGVFLYMGVASLNGIQFWDRCKLFLMPAKHQPDHAFLRHVPLRRIHLFTLVQILCLALLWILKSTMAAIIFPVMILGLIIVRRLLDLIFSQHDLAWIDNILPEKEKKESDRKKRRKEVHENTDKEPQFLPPSVVKIPMEGIPSDPQNGIHCVGRKRSSSWSHSL.

Residues 1–13 show a composition bias toward basic and acidic residues; that stretch reads MKVEEKAGVKKLE. 3 disordered regions span residues 1–80, 220–255, and 439–469; these read MKVE…SSLG, KKPIHRSLADIGKSVSTTNRSSARSPSAGPTLHHST, and GRSGASAGGGGSGGGAGGSGAGGGGSGNEAE. Residues 1–513 are Cytoplasmic-facing; the sequence is MKVEEKAGVK…DFYDGFHIQS (513 aa). Polar residues-rich tracts occupy residues 53-67 and 233-244; these read QRVQWSLQPDKSQQD and SVSTTNRSSARS. The segment covering 444–465 has biased composition (gly residues); the sequence is SAGGGGSGGGAGGSGAGGGGSG. Residues 514–536 form a helical membrane-spanning segment; that stretch reads ISAVLFIYLGCITNAITFGGLLG. Residues 537-547 are Extracellular-facing; sequence DATDNYQGVME. The helical transmembrane segment at 548 to 579 threads the bilayer; it reads SFLGTAMAGSLFCLFSGQPLIILSSTGPILIF. The Cytoplasmic portion of the chain corresponds to 580–598; it reads EKLLFDFSKANGLDYMEFR. A helical transmembrane segment spans residues 599 to 620; it reads LWIGLHSAIQCLILVATDASFI. The Extracellular segment spans residues 621–734; that stretch reads IKYITRFTEE…LGSSCQFVPD (114 aa). The helical transmembrane segment at 735–753 threads the bilayer; sequence LALMSFILFFGTYSMTLTL. The Cytoplasmic segment spans residues 754–772; it reads KKFKFSRYFPTKVRTLVAD. Residues 773–792 traverse the membrane as a helical segment; it reads FSIVFSILLFCGIDACFGLQ. The Extracellular segment spans residues 793–820; the sequence is TPKLHVPNVIKPTRPDRGWFVAPFGKNP. A helical membrane pass occupies residues 821–839; the sequence is WWVYPASILPALLVTILIF. Over 840–858 the chain is Cytoplasmic; sequence MDQQITAVIVNRKENKLRK. A helical transmembrane segment spans residues 859 to 875; it reads AAGYHLDLFWVGILMAL. The Extracellular segment spans residues 876-880; that stretch reads CSFMG. The chain crosses the membrane as a helical span at residues 881–900; sequence LPWYVAATVISIAHIDSLKM. Topologically, residues 901–920 are cytoplasmic; the sequence is ETETSAPGEQPQFLGVREQR. The helical transmembrane segment at 921 to 940 threads the bilayer; sequence VTGVMVFILTGISVFLAPIL. Topologically, residues 941-945 are extracellular; the sequence is KYIPM. Residues 946–966 traverse the membrane as a helical segment; the sequence is PVLYGVFLYMGVASLNGIQFW. The Cytoplasmic portion of the chain corresponds to 967–992; that stretch reads DRCKLFLMPAKHQPDHAFLRHVPLRR. Residues 993-1010 traverse the membrane as a helical segment; the sequence is IHLFTLVQILCLALLWIL. Residues 1011 to 1015 lie on the Extracellular side of the membrane; it reads KSTMA. The helical transmembrane segment at 1016–1033 threads the bilayer; it reads AIIFPVMILGLIIVRRLL. The Cytoplasmic segment spans residues 1034–1112; sequence DLIFSQHDLA…KRSSSWSHSL (79 aa). Residues 1055-1074 show a composition bias toward basic and acidic residues; it reads KESDRKKRRKEVHENTDKEP. The disordered stretch occupies residues 1055-1112; that stretch reads KESDRKKRRKEVHENTDKEPQFLPPSVVKIPMEGIPSDPQNGIHCVGRKRSSSWSHSL.

Belongs to the anion exchanger (TC 2.A.31) family. As to expression, observed in hepatocytes and in the apical region of bile duct intrahepatic cholangiocytes of liver. Also observed in uroepithelium cells lining the outer pelvic wall of the kidney (at protein level). Highly expressed in colon, distal colon, liver, kidney and testis. Moderate expression in duodenum and stomach and weak expression in heart. In kidney, very weakly expressed in the inner medulla, but abundantly expressed in cortex and outer medulla in the medullary thick ascending and cortical thick ascending limbs of the loop of Henle.

Its subcellular location is the basolateral cell membrane. It localises to the apical cell membrane. The catalysed reaction is 2 hydrogencarbonate(out) + Na(+)(out) = 2 hydrogencarbonate(in) + Na(+)(in). It catalyses the reaction 3 hydrogencarbonate(out) + Na(+)(out) = 3 hydrogencarbonate(in) + Na(+)(in). Its function is as follows. Mediates sodium- and bicarbonate-dependent electrogenic sodium bicarbonate cotransport, with a Na(+):HCO3(-) stoichiometry varying from 1:2 to 1:3. This is Electrogenic sodium bicarbonate cotransporter 4 from Rattus norvegicus (Rat).